The sequence spans 335 residues: N-acetylglucosaminyl-phosphatidylinositol de-N-acetylase (335 aa).

The helical transmembrane segment at 3 to 23 (SAFTFLSLAIFPLALFIFWTL) threads the bilayer. N-linked (GlcNAc...) asparagine glycans are attached at residues asparagine 128 and asparagine 153.

It belongs to the PIGL family.

The protein resides in the endoplasmic reticulum membrane. It catalyses the reaction a 6-(N-acetyl-alpha-D-glucosaminyl)-1-(1,2-diacyl-sn-glycero-3-phospho)-1D-myo-inositol + H2O = a 6-(alpha-D-glucosaminyl)-1-(1,2-diacyl-sn-glycero-3-phospho)-1D-myo-inositol + acetate. Its pathway is glycolipid biosynthesis; glycosylphosphatidylinositol-anchor biosynthesis. Functionally, involved in the second step of GPI biosynthesis. De-N-acetylation of N-acetylglucosaminyl-phosphatidylinositol. In Arthroderma benhamiae (strain ATCC MYA-4681 / CBS 112371) (Trichophyton mentagrophytes), this protein is N-acetylglucosaminyl-phosphatidylinositol de-N-acetylase.